The following is a 276-amino-acid chain: Secretagogin (276 aa).

6 consecutive EF-hand domains span residues 12 to 47, 71 to 93, 105 to 140, 149 to 184, 197 to 232, and 240 to 276; these read LDAAGFWQVWQRFDVEEKGYIEEKELDAFFYHMLTK, DVSKDGCIQMKELAGMFLSEDEN, DSSVEFMRIWRKYDADSSGFISAAELCNFLRDLFLH, KLEEYTGTMMKIFDKNKDGRLDLNDLARILALQENF, ERKRDFEKIFAHYDVSKTGALEGPEVDGFVKDMMEL, and VDLDKFREILLRHCDVNKDGKIQKSELALCLGLKINP. Residues aspartate 71, serine 73, aspartate 75, cysteine 77, glutamate 82, aspartate 118, aspartate 120, serine 122, glutamate 129, aspartate 162, asparagine 164, aspartate 166, arginine 168, aspartate 173, aspartate 210, serine 212, threonine 214, glutamate 221, aspartate 254, asparagine 256, aspartate 258, lysine 260, and glutamate 265 each coordinate Ca(2+).

The protein localises to the cytoplasm. It localises to the secreted. Its subcellular location is the cytoplasmic vesicle. The protein resides in the secretory vesicle membrane. This Bos taurus (Bovine) protein is Secretagogin (SCGN).